Consider the following 456-residue polypeptide: General transcription factor IIE subunit 1 (456 aa).

Residues 11 to 100 (LDDLVKMVIR…LWYIDYKHII (90 aa)) form the HTH TFE/IIEalpha-type domain. The C4-type zinc-finger motif lies at 129 to 157 (CQTCHKVYTALDIPKLLNMDTGALACEIC). The tract at residues 345–402 (ESAPDSGDADGNGSNSGSGGSTIEGNDGGNGEHQNKKMKLDDSQTVSSMSQSDDDGKD) is disordered. The span at 347–357 (APDSGDADGNG) shows a compositional bias: low complexity. Residues 358–375 (SNSGSGGSTIEGNDGGNG) show a composition bias toward gly residues. A compositionally biased stretch (basic and acidic residues) spans 377–386 (HQNKKMKLDD).

This sequence belongs to the TFIIE alpha subunit family. As to quaternary structure, TFIIE is a tetramer of two alpha and two beta subunits.

Its subcellular location is the nucleus. Functionally, recruits TFIIH to the initiation complex and stimulates the RNA polymerase II C-terminal domain kinase and DNA-dependent ATPase activities of TFIIH. Both TFIIH and TFIIE are required for promoter clearance by RNA polymerase. The chain is General transcription factor IIE subunit 1 (gtf2e1-1) from Dictyostelium discoideum (Social amoeba).